Reading from the N-terminus, the 247-residue chain is Putative urease accessory protein UreD homolog (247 aa).

This sequence belongs to the UreD family. As to quaternary structure, ureD, UreF and UreG form a complex that acts as a GTP-hydrolysis-dependent molecular chaperone, activating the urease apoprotein by helping to assemble the nickel containing metallocenter of UreC. The UreE protein probably delivers the nickel.

The protein resides in the cytoplasm. Its function is as follows. Required for maturation of urease via the functional incorporation of the urease nickel metallocenter. This chain is Putative urease accessory protein UreD homolog, found in Escherichia coli O157:H7.